The primary structure comprises 736 residues: Na(+)/H(+) antiporter NhaA (736 aa).

The segment at 1 to 387 (MNHSPQSARP…ICGYLLLRAA (387 aa)) is na(+)/H(+) antiporter NhaA. A run of 12 helical transmembrane segments spans residues 23–43 (AGGITLMAAAALALIVANSPF), 58–78 (LSLAHWINDALMAIFFLLVGL), 96–116 (MLPGIAAAGGVILPAIIFAVL), 126–146 (GWAVPSATDIAFALGVLSLLG), 155–175 (VFLATLAILDDLAAVVIIAIF), 178–198 (AEISMPYLGAAFITAAVLFVM), 201–221 (MGVVKLLPYLISAVILWFFVF), 224–244 (GVHATVAGVVAALMIPLKPAP), 265–285 (VAFIVVPIFGFANAGISFKGL), 298–318 (ILLGLFLGKQFGVFGAAWLAI), 334–354 (LYGVAILCGIGFTMSIFIGLL), and 367–387 (IGVLSGSALSAICGYLLLRAA). Positions 388–736 (RPDQSAANPL…EKAIWARYGL (349 aa)) are peptidase S49.

It in the N-terminal section; belongs to the NhaA Na(+)/H(+) (TC 2.A.33) antiporter family. The protein in the C-terminal section; belongs to the peptidase S49 family.

It is found in the cell inner membrane. The catalysed reaction is Na(+)(in) + 2 H(+)(out) = Na(+)(out) + 2 H(+)(in). Functionally, na(+)/H(+) antiporter that extrudes sodium in exchange for external protons. This is Na(+)/H(+) antiporter NhaA from Brucella abortus (strain 2308).